The following is a 309-amino-acid chain: Aspartate carbamoyltransferase catalytic subunit (309 aa).

Carbamoyl phosphate is bound by residues arginine 55 and threonine 56. L-aspartate is bound at residue lysine 85. The carbamoyl phosphate site is built by arginine 106, histidine 135, and glutamine 138. Positions 168 and 230 each coordinate L-aspartate. Carbamoyl phosphate-binding residues include leucine 268 and proline 269.

It belongs to the aspartate/ornithine carbamoyltransferase superfamily. ATCase family. Heterododecamer (2C3:3R2) of six catalytic PyrB chains organized as two trimers (C3), and six regulatory PyrI chains organized as three dimers (R2).

It carries out the reaction carbamoyl phosphate + L-aspartate = N-carbamoyl-L-aspartate + phosphate + H(+). It functions in the pathway pyrimidine metabolism; UMP biosynthesis via de novo pathway; (S)-dihydroorotate from bicarbonate: step 2/3. Functionally, catalyzes the condensation of carbamoyl phosphate and aspartate to form carbamoyl aspartate and inorganic phosphate, the committed step in the de novo pyrimidine nucleotide biosynthesis pathway. This is Aspartate carbamoyltransferase catalytic subunit from Aliivibrio fischeri (strain ATCC 700601 / ES114) (Vibrio fischeri).